The primary structure comprises 359 residues: Prostaglandin D2 receptor (359 aa).

The Extracellular portion of the chain corresponds to 1–21; the sequence is MKSPFYRCQNTTSVEKGNSAV. Residue N10 is glycosylated (N-linked (GlcNAc...) asparagine). The helical transmembrane segment at 22-42 threads the bilayer; that stretch reads MGGVLFSTGLLGNLLALGLLA. At 43–59 the chain is on the cytoplasmic side; that stretch reads RSGLGWCSRRPLRPLPS. The chain crosses the membrane as a helical span at residues 60–80; that stretch reads VFYMLVCGLTVTDLLGKCLLS. Residues 81 to 107 lie on the Extracellular side of the membrane; it reads PVVLAAYAQNRSLRVLAPALDNSLCQA. N90 carries N-linked (GlcNAc...) asparagine glycosylation. Cysteines 105 and 183 form a disulfide. A helical transmembrane segment spans residues 108 to 128; that stretch reads FAFFMSFFGLSSTLQLLAMAL. Residues 129–150 are Cytoplasmic-facing; that stretch reads ECWLSLGHPFFYRRHITLRLGA. The helical transmembrane segment at 151–171 threads the bilayer; it reads LVAPVVSAFSLAFCALPFMGF. The Extracellular portion of the chain corresponds to 172–195; that stretch reads GKFVQYCPGTWCFIQMVHEEGSLS. The chain crosses the membrane as a helical span at residues 196–216; it reads VLGYSVLYSSLMALLVLATVL. At 217–262 the chain is on the cytoplasmic side; sequence CNLGAMRNLYAMHRRLQRHPRSCTRDCAEPRADGREASPQPLEELD. A helical transmembrane segment spans residues 263-283; the sequence is HLLLLALMTVLFTMCSLPVIY. Topologically, residues 284-310 are extracellular; the sequence is RAYYGAFKDVKEKNRTSEEAEDLRALR. Residue N297 is glycosylated (N-linked (GlcNAc...) asparagine). Residues 311–331 traverse the membrane as a helical segment; that stretch reads FLSVISIVDPWIFIIFRSPVF. Over 332–359 the chain is Cytoplasmic; sequence RIFFHKIFIRPLRYRSRCSNSTNMESSL.

Belongs to the G-protein coupled receptor 1 family. Expressed in retinal choroid, ciliary epithelium, longitudinal and circular ciliary muscles, iris, small intestine and platelet membranes.

It is found in the cell membrane. Functionally, receptor for prostaglandin D2 (PGD2). The activity of this receptor is mainly mediated by G(s) proteins that stimulate adenylate cyclase, resulting in an elevation of intracellular cAMP. A mobilization of calcium is also observed, but without formation of inositol 1,4,5-trisphosphate. Involved in PLA2G3-dependent maturation of mast cells. PLA2G3 is secreted by immature mast cells and acts on nearby fibroblasts upstream to PTDGS to synthesize PGD2, which in turn promotes mast cell maturation and degranulation via PTGDR. In Homo sapiens (Human), this protein is Prostaglandin D2 receptor (PTGDR).